A 20-amino-acid polypeptide reads, in one-letter code: Citrate synthase (20 aa).

The protein belongs to the citrate synthase family. Homodimer.

It carries out the reaction oxaloacetate + acetyl-CoA + H2O = citrate + CoA + H(+). It participates in carbohydrate metabolism; tricarboxylic acid cycle; isocitrate from oxaloacetate: step 1/2. The polypeptide is Citrate synthase (Populus euphratica (Euphrates poplar)).